Here is a 212-residue protein sequence, read N- to C-terminus: Uracil phosphoribosyltransferase (212 aa).

Residues Arg-78, Arg-103, and 130-138 (DPMLATGGS) contribute to the 5-phospho-alpha-D-ribose 1-diphosphate site. Residues Ile-193 and 198-200 (GDA) each bind uracil. Residue Asp-199 coordinates 5-phospho-alpha-D-ribose 1-diphosphate.

It belongs to the UPRTase family. Mg(2+) is required as a cofactor.

The enzyme catalyses UMP + diphosphate = 5-phospho-alpha-D-ribose 1-diphosphate + uracil. Its pathway is pyrimidine metabolism; UMP biosynthesis via salvage pathway; UMP from uracil: step 1/1. Allosterically activated by GTP. Its function is as follows. Catalyzes the conversion of uracil and 5-phospho-alpha-D-ribose 1-diphosphate (PRPP) to UMP and diphosphate. The polypeptide is Uracil phosphoribosyltransferase (Azotobacter vinelandii (strain DJ / ATCC BAA-1303)).